A 198-amino-acid chain; its full sequence is MGTISASLVKELREKTGAGMMDCKEALTACDGDIEKAVDFLRQKGLAKAAKRSGRETSEGIVESYIHMGGKIGVMVEVNCESDFVAKTDDFKEFARNVAMQIAATNPAGIAPEDVPADLLERERQVYRAQVLEMGKPENMVDKIVDGKIKKFFKESCLIEQQYVKNPDITIGDYLNETVAKIGESIRIKRFARFALGE.

The interval 82-85 (SDFV) is involved in Mg(2+) ion dislocation from EF-Tu.

It belongs to the EF-Ts family.

The protein localises to the cytoplasm. Associates with the EF-Tu.GDP complex and induces the exchange of GDP to GTP. It remains bound to the aminoacyl-tRNA.EF-Tu.GTP complex up to the GTP hydrolysis stage on the ribosome. This chain is Elongation factor Ts, found in Desulfosudis oleivorans (strain DSM 6200 / JCM 39069 / Hxd3) (Desulfococcus oleovorans).